A 371-amino-acid chain; its full sequence is Putative agmatine deiminase (371 aa).

The active-site Amidino-cysteine intermediate is Cys-361.

This sequence belongs to the agmatine deiminase family.

The catalysed reaction is agmatine + H2O = N-carbamoylputrescine + NH4(+). The sequence is that of Putative agmatine deiminase from Selenomonas ruminantium.